The sequence spans 881 residues: DNA replication helicase (881 aa).

90 to 97 (GNAGSGKS) contacts ATP.

The protein belongs to the herpesviridae helicase family. In terms of assembly, associates with the primase and the primase-associated factor to form the helicase-primase complex.

The protein resides in the host nucleus. In terms of biological role, component of the helicase/primase complex. Unwinds the DNA at the replication forks and generates single-stranded DNA for both leading and lagging strand synthesis. The primase synthesizes short RNA primers on the lagging strand that the polymerase elongates using dNTPs. Possesses helicase-like motifs and therefore may act as the helicase subunit of the complex. This is DNA replication helicase from Homo sapiens (Human).